Reading from the N-terminus, the 446-residue chain is Glutamine synthetase (446 aa).

Residues 18–103 (ENVRYLRLQF…LICDVFKTDG (86 aa)) enclose the GS beta-grasp domain. The 337-residue stretch at 110–446 (PRANLKRVLR…WEREQYIKQY (337 aa)) folds into the GS catalytic domain. Residues E134 and E136 each coordinate Mg(2+). An ATP-binding site is contributed by E186. Mg(2+)-binding residues include E191 and E198. Residues 242-243 (NG) and G243 each bind L-glutamate. H247 is a binding site for Mg(2+). S251 contacts ATP. Residues R300, E306, and R318 each contribute to the L-glutamate site. R318 and R323 together coordinate ATP. E335 contributes to the Mg(2+) binding site. Position 337 (R337) interacts with L-glutamate.

Belongs to the glutamine synthetase family. Oligomer of 12 subunits arranged in the form of two hexagons. In its feedback-inhibited form, interacts with TnrA in order to block its DNA-binding activity. Mg(2+) serves as cofactor.

The protein resides in the cytoplasm. The enzyme catalyses L-glutamate + NH4(+) + ATP = L-glutamine + ADP + phosphate + H(+). Its activity is regulated as follows. Inhibited by glutamine. Functionally, glutamine synthetase (GS) is an unusual multitasking protein that functions as an enzyme, a transcription coregulator, and a chaperone in ammonium assimilation and in the regulation of genes involved in nitrogen metabolism. It catalyzes the ATP-dependent biosynthesis of glutamine from glutamate and ammonia. Feedback-inhibited GlnA also interacts with and regulates the activity of the transcriptional regulator TnrA. During nitrogen limitation, TnrA is in its DNA-binding active state and turns on the transcription of genes required for nitrogen assimilation. Under conditions of nitrogen excess, feedback-inhibited GlnA forms a stable complex with TnrA, which inhibits its DNA-binding activity. In contrast, feedback-inhibited GlnA acts as a chaperone to stabilize the DNA-binding activity of GlnR, which represses the transcription of nitrogen assimilation genes. This Staphylococcus epidermidis (strain ATCC 35984 / DSM 28319 / BCRC 17069 / CCUG 31568 / BM 3577 / RP62A) protein is Glutamine synthetase.